Consider the following 226-residue polypeptide: E3 ubiquitin-protein ligase RNF186 (226 aa).

The RING-type zinc finger occupies 39-85 (CLVCREPYNCARSPKLLSCQHTFCAVCLKLLLYVQEDTWSIPCPLCR). A run of 2 helical transmembrane segments spans residues 157-177 (HLLLLALVIVLILPFIYPGVI) and 179-199 (WVLAFVIALALLMSTLFCCHP).

Interacts with BNIP1. Post-translationally, polyubiquitinated. 'Lys-29'-linked autoubiquitination leads to proteasomal degradation.

It localises to the endoplasmic reticulum membrane. The enzyme catalyses S-ubiquitinyl-[E2 ubiquitin-conjugating enzyme]-L-cysteine + [acceptor protein]-L-lysine = [E2 ubiquitin-conjugating enzyme]-L-cysteine + N(6)-ubiquitinyl-[acceptor protein]-L-lysine.. The protein operates within protein modification; protein ubiquitination. In terms of biological role, E3 ubiquitin protein ligase that is part of an apoptotic signaling pathway activated by endoplasmic reticulum stress. Stimulates the expression of proteins specific of the unfolded protein response (UPR), ubiquitinates BNIP1 and regulates its localization to the mitochondrion and induces calcium release from the endoplasmic reticulum that ultimately leads to cell apoptosis. Plays a role in the maintenance of intestinal homeostasis and clearance of enteric pathogens. Upon NOD2 stimulation, ubiquitinates the ER stress sensor activating transcription factor 6/ATF6 and promotes the unfolded protein response UPR. Participates in basal level of autophagy maintenance by regulating the ubiquitination of EPHB2. Upon stimulation by ligand EFNB1, ubiquitinates EPHB2 and further recruits MAP1LC3B for autophagy induction. Controls nutrient sensing by ubiquitinating Sestrin-2/SESN2, which is an intracellular sensor of cytosolic leucine and inhibitor of mTORC1 activity. The sequence is that of E3 ubiquitin-protein ligase RNF186 from Mus musculus (Mouse).